The primary structure comprises 78 residues: Short neurotoxin 342 (78 aa).

An N-terminal signal peptide occupies residues 1 to 21 (MKTLLLTLVVLTIVCLDLGYT). 4 disulfide bridges follow: cysteine 24–cysteine 43, cysteine 38–cysteine 57, cysteine 59–cysteine 70, and cysteine 71–cysteine 76.

This sequence belongs to the three-finger toxin family. Short-chain subfamily. Type I alpha-neurotoxin sub-subfamily. Expressed by the venom gland.

It is found in the secreted. Binds to muscle nicotinic acetylcholine receptor (nAChR) and inhibit acetylcholine from binding to the receptor, thereby impairing neuromuscular transmission. This chain is Short neurotoxin 342, found in Drysdalia coronoides (White-lipped snake).